The primary structure comprises 201 residues: Alpha-1-acid glycoprotein 2 (201 aa).

Residues 1 to 18 (MALSWVLTVLSLLPLLEA) form the signal peptide. The residue at position 19 (glutamine 19) is a Pyrrolidone carboxylic acid. Intrachain disulfides connect cysteine 23–cysteine 165 and cysteine 90–cysteine 183. N-linked (GlcNAc...) (complex) asparagine glycosylation occurs at asparagine 33. N-linked (GlcNAc...) asparagine glycans are attached at residues asparagine 56, asparagine 72, asparagine 93, and asparagine 103.

Belongs to the calycin superfamily. Lipocalin family. In terms of processing, N-glycosylated. N-glycan heterogeneity at Asn-33: Hex5HexNAc4 (minor), Hex6HexNAc5 (major) and dHex1Hex6HexNAc5 (minor). In terms of tissue distribution, expressed by the liver and secreted in plasma.

The protein resides in the secreted. Functions as a transport protein in the blood stream. Binds various hydrophobic ligands in the interior of its beta-barrel domain. Also binds synthetic drugs and influences their distribution and availability. Appears to function in modulating the activity of the immune system during the acute-phase reaction. In Homo sapiens (Human), this protein is Alpha-1-acid glycoprotein 2 (ORM2).